The primary structure comprises 61 residues: uncharacterized protein (61 aa).

This is an uncharacterized protein from Escherichia coli (Bacteriophage T4).